A 405-amino-acid polypeptide reads, in one-letter code: D-threonate kinase (405 aa).

Substrate contacts are provided by residues D12, R59, and 88-91 (KVDS). Residues S243, 337-340 (GGDG), and G383 each bind ATP.

This sequence belongs to the four-carbon acid sugar kinase family.

The catalysed reaction is D-threonate + ATP = 4-O-phospho-D-threonate + ADP + H(+). Its function is as follows. Catalyzes the ATP-dependent phosphorylation of D-threonate to D-threonate 4-phosphate. Can also phosphorylate 4-hydroxy-L-threonine, with lower efficiency. This Bordetella bronchiseptica (strain ATCC BAA-588 / NCTC 13252 / RB50) (Alcaligenes bronchisepticus) protein is D-threonate kinase.